A 146-amino-acid chain; its full sequence is 3-dehydroquinate dehydratase (146 aa).

Tyr-22 serves as the catalytic Proton acceptor. Substrate contacts are provided by Asn-73, His-79, and Asp-86. His-99 functions as the Proton donor in the catalytic mechanism. Residues 100–101 and Arg-110 contribute to the substrate site; that span reads LS.

Belongs to the type-II 3-dehydroquinase family. As to quaternary structure, homododecamer.

It catalyses the reaction 3-dehydroquinate = 3-dehydroshikimate + H2O. The protein operates within metabolic intermediate biosynthesis; chorismate biosynthesis; chorismate from D-erythrose 4-phosphate and phosphoenolpyruvate: step 3/7. Catalyzes a trans-dehydration via an enolate intermediate. The protein is 3-dehydroquinate dehydratase of Synechococcus sp. (strain CC9605).